A 1179-amino-acid chain; its full sequence is ATP-dependent helicase/deoxyribonuclease subunit B (1179 aa).

Belongs to the helicase family. AddB/RexB type 2 subfamily. As to quaternary structure, heterodimer of AddA and RexB. It depends on Mg(2+) as a cofactor.

The heterodimer acts as both an ATP-dependent DNA helicase and an ATP-dependent, dual-direction single-stranded exonuclease. Recognizes the chi site generating a DNA molecule suitable for the initiation of homologous recombination. This subunit has 5' -&gt; 3' nuclease activity but not helicase activity. The sequence is that of ATP-dependent helicase/deoxyribonuclease subunit B from Lacticaseibacillus casei (strain BL23) (Lactobacillus casei).